Reading from the N-terminus, the 547-residue chain is Chaperonin GroEL (547 aa).

ATP-binding positions include 29–32 (TLGP), Lys-50, 86–90 (DGTTT), Gly-414, and Asp-495. Residues 525-547 (PSDKEDSIPPMRGGMGGMGGMDF) are disordered. Residues 537–547 (GGMGGMGGMDF) show a composition bias toward gly residues.

This sequence belongs to the chaperonin (HSP60) family. As to quaternary structure, forms a cylinder of 14 subunits composed of two heptameric rings stacked back-to-back. Interacts with the co-chaperonin GroES.

Its subcellular location is the cytoplasm. It catalyses the reaction ATP + H2O + a folded polypeptide = ADP + phosphate + an unfolded polypeptide.. Functionally, together with its co-chaperonin GroES, plays an essential role in assisting protein folding. The GroEL-GroES system forms a nano-cage that allows encapsulation of the non-native substrate proteins and provides a physical environment optimized to promote and accelerate protein folding. In Rickettsia felis (strain ATCC VR-1525 / URRWXCal2) (Rickettsia azadi), this protein is Chaperonin GroEL.